Here is a 146-residue protein sequence, read N- to C-terminus: Large ribosomal subunit protein uL11 (146 aa).

Belongs to the universal ribosomal protein uL11 family. Part of the ribosomal stalk of the 50S ribosomal subunit. Interacts with L10 and the large rRNA to form the base of the stalk. L10 forms an elongated spine to which L12 dimers bind in a sequential fashion forming a multimeric L10(L12)X complex. One or more lysine residues are methylated.

In terms of biological role, forms part of the ribosomal stalk which helps the ribosome interact with GTP-bound translation factors. The polypeptide is Large ribosomal subunit protein uL11 (Wolbachia pipientis wMel).